A 120-amino-acid chain; its full sequence is MSGELPPQVQNQLAQLQQLQQQAQALVAQKSQIELLKKEAEAAIKELDKSPDDVVVYKNVGELMLRSDKATLMTELKERVDLLDLRLKTVAKQEERIQSRFNQLQDQLRQSLGQMPPRGG.

The protein belongs to the prefoldin subunit beta family. Heterohexamer of two alpha and four beta subunits.

The protein resides in the cytoplasm. Functionally, molecular chaperone capable of stabilizing a range of proteins. Seems to fulfill an ATP-independent, HSP70-like function in archaeal de novo protein folding. This chain is Prefoldin subunit beta, found in Methanothrix thermoacetophila (strain DSM 6194 / JCM 14653 / NBRC 101360 / PT) (Methanosaeta thermophila).